Consider the following 349-residue polypeptide: Sphingomyelinase D (349 aa).

Residues 1–18 (MLLSSLISLALLSSQVVA) form the signal peptide. Histidine 52 is an active-site residue. Positions 72, 74, and 123 each coordinate Mg(2+). Residues 310 to 317 (ATNDNNPW) carry the SMD-tail motif.

It belongs to the sphingomyelinase D/phospholipase D family. It depends on Mg(2+) as a cofactor.

The protein localises to the secreted. The enzyme catalyses a sphingomyelin + H2O = an N-acylsphing-4-enine 1-phosphate + choline + H(+). Catalyzes the hydrolysis of sphingomyelin. Sphingomyelinases D are produced by some spider in their venoms, but also by arthropods such as ticks, or pathogenic bacteria and fungi. They might play a role in pathogenicity through different mechanisms, such as membrane destabilization and host cell penetration, but also pulmonary inflammation and cutaneous lesions. In Uncinocarpus reesii (strain UAMH 1704), this protein is Sphingomyelinase D.